A 568-amino-acid polypeptide reads, in one-letter code: General O-oligosaccharyltransferase (568 aa).

12 helical membrane-spanning segments follow: residues Val17–Leu37, Leu46–Leu66, Leu78–Phe98, Ala101–Leu121, Phe132–Ile152, Phe176–Leu196, Ile214–Ile234, Tyr251–Thr271, Leu349–Ile369, Ala376–Leu396, Leu397–Ile417, and Val429–Trp449.

This sequence belongs to the PglL O-oligosaccharyltransferase family.

Its subcellular location is the cell membrane. In terms of biological role, catalyzes the O-glycosylation of multiple protein targets. Is responsible for general protein glycosylation within A.baylyi ADP1. Does not act as an O-antigen ligase. In Acinetobacter baylyi (strain ATCC 33305 / BD413 / ADP1), this protein is General O-oligosaccharyltransferase.